Here is a 371-residue protein sequence, read N- to C-terminus: DNA primase DnaG (371 aa).

The Toprim domain maps to 173–248; the sequence is DEIILVEGRA…DIDYVAVAPP (76 aa). Residues Glu-179, Asp-221, and Asp-223 each contribute to the Mg(2+) site.

The protein belongs to the archaeal DnaG primase family. Forms a ternary complex with MCM helicase and DNA. Component of the archaeal exosome complex. Mg(2+) serves as cofactor.

It catalyses the reaction ssDNA + n NTP = ssDNA/pppN(pN)n-1 hybrid + (n-1) diphosphate.. RNA polymerase that catalyzes the synthesis of short RNA molecules used as primers for DNA polymerase during DNA replication. Also part of the exosome, which is a complex involved in RNA degradation. Acts as a poly(A)-binding protein that enhances the interaction between heteromeric, adenine-rich transcripts and the exosome. In Nanoarchaeum equitans (strain Kin4-M), this protein is DNA primase DnaG.